A 246-amino-acid polypeptide reads, in one-letter code: Putative L,D-transpeptidase YafK (246 aa).

The signal sequence occupies residues 1-19 (MRKIALILAMLLIPCVSFA). Positions 44–174 (VYIQIFKEER…GQPSVQVSIY (131 aa)) constitute a L,D-TPase catalytic domain. Histidine 135 serves as the catalytic Proton donor/acceptor. The active-site Nucleophile is the cysteine 143.

The protein belongs to the YkuD family.

Its pathway is cell wall biogenesis; peptidoglycan biosynthesis. The protein is Putative L,D-transpeptidase YafK (yafK) of Escherichia coli O157:H7.